Consider the following 1052-residue polypeptide: Protein HelA (1052 aa).

The next 13 helical transmembrane spans lie at 14 to 34, 121 to 141, 348 to 368, 369 to 389, 393 to 413, 450 to 470, 483 to 503, 537 to 557, 878 to 898, 903 to 923, 934 to 954, 979 to 999, and 1011 to 1031; these read WFVL…FQRL, LPPG…EIFM, GALL…AALI, TAMV…ENQI, LMSL…IIVE, SIFG…LTGV, IIAL…AVAI, VVIS…FHLG, LQIV…ISFG, ALLV…ALWL, VGFI…ITFI, PVLM…LATG, and VVIG…PGLY.

It belongs to the resistance-nodulation-cell division (RND) (TC 2.A.6) family.

The protein resides in the cell inner membrane. Functionally, presumed to function with HelC and HelB in efflux of an unidentified substrate. The protein is Protein HelA (helA) of Legionella pneumophila.